A 316-amino-acid polypeptide reads, in one-letter code: Olfactory receptor 2G6 (316 aa).

At 1 to 25 (MEETNNSSEKGFLLLGFSDQPQLER) the chain is on the extracellular side. N-linked (GlcNAc...) asparagine glycosylation is found at Asn5 and Asn6. Residues 26–49 (FLFAIILYFYVLSLLGNTALILVC) form a helical membrane-spanning segment. At 50 to 57 (CLDSRLHT) the chain is on the cytoplasmic side. The helical transmembrane segment at 58–79 (PMYFFLSNLSCVDICFTTSVAP) threads the bilayer. The Extracellular segment spans residues 80–100 (QLLVTMNKKDKTMSYGGCVAQ). Cys97 and Cys189 are disulfide-bonded. Residues 101 to 120 (LYVAMGLGSSECILLAVMAY) traverse the membrane as a helical segment. The Cytoplasmic segment spans residues 121 to 139 (DRYAAVCRPLRYIAIMHPR). A helical transmembrane segment spans residues 140-158 (FCASLAGGAWLSGLITSLI). Residues 159–195 (QCSLTVQLPLCGHRTLDHIFCEVPVLIKLACVDTTFN) lie on the Extracellular side of the membrane. The chain crosses the membrane as a helical span at residues 196-219 (EAELFVASVVFLIVPVLLILVSYG). Over 220 to 236 (FITQAVLRIKSAAGRQK) the chain is Cytoplasmic. The chain crosses the membrane as a helical span at residues 237 to 259 (AFGTCSSHLVVVIIFYGTIIFMY). Residues 260–272 (LQPANRRSKNQGK) lie on the Extracellular side of the membrane. The helical transmembrane segment at 273-292 (FVSLFYTIVTPLLNPIIYTL) threads the bilayer. Over 293–316 (RNKDVKGALRTLILGSAAGQSHKD) the chain is Cytoplasmic.

The protein belongs to the G-protein coupled receptor 1 family.

The protein resides in the cell membrane. Functionally, odorant receptor. The chain is Olfactory receptor 2G6 (OR2G6) from Homo sapiens (Human).